Here is an 874-residue protein sequence, read N- to C-terminus: Probable inorganic carbon transporter subunit DabA (874 aa).

4 residues coordinate Zn(2+): cysteine 398, aspartate 400, histidine 580, and cysteine 595.

The protein belongs to the inorganic carbon transporter (TC 9.A.2) DabA family. As to quaternary structure, forms a complex with DabB. It depends on Zn(2+) as a cofactor.

The protein localises to the cell membrane. Functionally, part of an energy-coupled inorganic carbon pump. This is Probable inorganic carbon transporter subunit DabA from Bacillus anthracis (strain A0248).